A 350-amino-acid polypeptide reads, in one-letter code: 3-isopropylmalate dehydrogenase (350 aa).

NAD(+) is bound at residue 76 to 87; the sequence is GPKWDNAPKRPE. Substrate is bound by residues Arg94, Arg104, Arg132, and Asp217. Residues Asp217, Asp241, and Asp245 each contribute to the Mg(2+) site. 275 to 287 serves as a coordination point for NAD(+); sequence GSAPDIANQNIAN.

This sequence belongs to the isocitrate and isopropylmalate dehydrogenases family. LeuB type 1 subfamily. Homodimer. The cofactor is Mg(2+). Mn(2+) is required as a cofactor.

The protein localises to the cytoplasm. The catalysed reaction is (2R,3S)-3-isopropylmalate + NAD(+) = 4-methyl-2-oxopentanoate + CO2 + NADH. Its pathway is amino-acid biosynthesis; L-leucine biosynthesis; L-leucine from 3-methyl-2-oxobutanoate: step 3/4. Catalyzes the oxidation of 3-carboxy-2-hydroxy-4-methylpentanoate (3-isopropylmalate) to 3-carboxy-4-methyl-2-oxopentanoate. The product decarboxylates to 4-methyl-2 oxopentanoate. The protein is 3-isopropylmalate dehydrogenase of Listeria innocua serovar 6a (strain ATCC BAA-680 / CLIP 11262).